The following is a 480-amino-acid chain: EGF-like repeat and discoidin I-like domain-containing protein 3 (480 aa).

The first 23 residues, 1–23, serve as a signal peptide directing secretion; it reads MKRSVAVWLLVGLSLGVPQFGKG. One can recognise an EGF-like 1 domain in the interval 24–60; sequence DICDPNPCENGGICLPGLADGSFSCECPDGFTDPNCS. Intrachain disulfides connect Cys-26–Cys-37, Cys-31–Cys-48, and Cys-50–Cys-59. Residue Thr-73 is glycosylated (O-linked (GalNAc...) threonine). EGF-like domains follow at residues 74 to 117 and 119 to 155; these read SAGP…IHCQ and NINE…RNCQ. Cystine bridges form between Cys-78/Cys-89, Cys-83/Cys-105, and Cys-107/Cys-116. Thr-88 carries O-linked (Fuc...) threonine glycosylation. The short motif at 96-98 is the Cell attachment site element; that stretch reads RGD. Ca(2+) contacts are provided by Asn-119, Ile-120, and Glu-122. 6 disulfide bridges follow: Cys-123/Cys-134, Cys-128/Cys-143, Cys-145/Cys-154, Cys-158/Cys-314, Cys-301/Cys-305, and Cys-319/Cys-476. Positions 136 and 137 each coordinate Ca(2+). N-linked (GlcNAc...) asparagine glycosylation occurs at Asn-140. F5/8 type C domains are found at residues 158-314 and 319-476; these read CSGP…LLGC and CSEP…LLGC.

The protein localises to the secreted. Promotes adhesion of endothelial cells through interaction with the alpha-v/beta-3 integrin receptor. Inhibits formation of vascular-like structures. May be involved in regulation of vascular morphogenesis of remodeling in embryonic development. This chain is EGF-like repeat and discoidin I-like domain-containing protein 3 (EDIL3), found in Homo sapiens (Human).